A 429-amino-acid chain; its full sequence is Glutamate-1-semialdehyde 2,1-aminomutase 2 (429 aa).

Lys-268 bears the N6-(pyridoxal phosphate)lysine mark.

The protein belongs to the class-III pyridoxal-phosphate-dependent aminotransferase family. HemL subfamily. As to quaternary structure, homodimer. Pyridoxal 5'-phosphate serves as cofactor.

It is found in the cytoplasm. It catalyses the reaction (S)-4-amino-5-oxopentanoate = 5-aminolevulinate. Its pathway is porphyrin-containing compound metabolism; protoporphyrin-IX biosynthesis; 5-aminolevulinate from L-glutamyl-tRNA(Glu): step 2/2. This chain is Glutamate-1-semialdehyde 2,1-aminomutase 2, found in Bacillus cereus (strain ATCC 10987 / NRS 248).